The following is a 351-amino-acid chain: Peptidyl-Lys metalloendopeptidase (351 aa).

An N-terminal signal peptide occupies residues 1-22 (MFSLSSRFFLYSLCLSAVAVSA). A propeptide spanning residues 23-183 (APGLSLSLSG…VARRSNLGKR (161 aa)) is cleaved from the precursor. Disulfide bonds link Cys189/Cys259 and Cys261/Cys281. Residue His301 participates in Zn(2+) binding. Glu302 is an active-site residue. Zn(2+)-binding residues include His305 and Asp314.

Belongs to the peptidase M35 family. Zn(2+) is required as a cofactor.

The protein localises to the secreted. It carries out the reaction Preferential cleavage in proteins: -Xaa-|-Lys- (in which Xaa may be Pro).. With respect to regulation, inhibited by chelating agents such as imidazole, alpha,alpha'-bipyridine, and 1,10-phenanthroline. The chain is Peptidyl-Lys metalloendopeptidase (MEP) from Armillaria mellea (Honey mushroom).